Reading from the N-terminus, the 461-residue chain is Probable tubulin polyglutamylase TTLL9 (461 aa).

Polar residues predominate over residues 1 to 10; sequence MSRQKSQTSK. The segment at 1-20 is disordered; sequence MSRQKSQTSKGHGASKGKER. Positions 22 to 402 constitute a TTL domain; it reads QRTLIRFKTT…EARLTGKEKR (381 aa). ATP is bound by residues Lys-149 and 155 to 156; that span reads QG. Gln-155 contacts a protein. Polar residues predominate over residues 186–197; it reads QATRANVNPSGS. Residues 186–208 are disordered; that stretch reads QATRANVNPSGSHDTRSSDDQKD. Over residues 198 to 208 the composition is skewed to basic and acidic residues; that stretch reads HDTRSSDDQKD. ATP-binding positions include 218-221 and 231-233; these read QRYV and KFD. Arg-257 provides a ligand contact to L-glutamate. 276–277 is an ATP binding site; the sequence is TN. Residue Lys-294 participates in L-glutamate binding. Residues Asp-348, Glu-361, and Asn-363 each coordinate Mg(2+). Lys-379 serves as a coordination point for L-glutamate.

It belongs to the tubulin--tyrosine ligase family. Mg(2+) is required as a cofactor.

It is found in the cytoplasm. The protein resides in the cytoskeleton. Its subcellular location is the cilium basal body. It localises to the flagellum axoneme. It catalyses the reaction (L-glutamyl)(n)-gamma-L-glutamyl-L-glutamyl-[protein] + L-glutamate + ATP = (L-glutamyl)(n+1)-gamma-L-glutamyl-L-glutamyl-[protein] + ADP + phosphate + H(+). Its function is as follows. Probable tubulin polyglutamylase that generates side chains of glutamate on the gamma-carboxyl group of specific glutamate residues within the C-terminal tail of target proteins. Similar to TTLL1, may acquire enzymatic activity only in complex with other proteins as it is most likely lacking domains important for autonomous activity. Mediates tubulin polyglutamylation which induces establishment of microtubule heterogeneity in sperm flagella, thereby playing a role in normal motile flagella axoneme structure and sperm flagella beating pattern. The polypeptide is Probable tubulin polyglutamylase TTLL9 (Ttll9) (Rattus norvegicus (Rat)).